The following is a 105-amino-acid chain: Thioredoxin (105 aa).

The Thioredoxin domain occupies 2–103 (VKQIESKSAF…KEKLEATIKG (102 aa)). Position 3 is an N6-acetyllysine (K3). K8 is modified (N6-succinyllysine). Residues C32 and C35 each act as nucleophile in the active site. A disulfide bridge connects residues C32 and C35. K39 carries the post-translational modification N6-acetyllysine. S-nitrosocysteine is present on residues C62 and C69. C73 carries the post-translational modification S-nitrosocysteine; alternate. K94 carries the post-translational modification N6-acetyllysine; alternate. Residue K94 is modified to N6-succinyllysine; alternate.

The protein belongs to the thioredoxin family. As to quaternary structure, homodimer; disulfide-linked. Interacts with TXNIP through the redox-active site. Interacts with MAP3K5 and CASP3. Interacts with APEX1; the interaction stimulates the FOS/JUN AP-1 DNA-binding activity in a redox-dependent manner. In terms of processing, in the fully reduced protein, both Cys-69 and Cys-73 are nitrosylated in response to nitric oxide (NO). When two disulfide bonds are present in the protein, only Cys-73 is nitrosylated. Cys-73 can serve as donor for nitrosylation of target proteins.

Its subcellular location is the nucleus. It is found in the cytoplasm. The protein localises to the secreted. Functionally, participates in various redox reactions through the reversible oxidation of its active center dithiol to a disulfide and catalyzes dithiol-disulfide exchange reactions. Plays a role in the reversible S-nitrosylation of cysteine residues in target proteins, and thereby contributes to the response to intracellular nitric oxide. Nitrosylates the active site Cys of CASP3 in response to nitric oxide (NO), and thereby inhibits caspase-3 activity. Induces the FOS/JUN AP-1 DNA binding activity in ionizing radiation (IR) cells through its oxidation/reduction status and stimulates AP-1 transcriptional activity. The protein is Thioredoxin (TXN) of Equus caballus (Horse).